The following is a 287-amino-acid chain: Putative glutamate--cysteine ligase regulatory subunit (287 aa).

It belongs to the aldo/keto reductase family. Glutamate--cysteine ligase light chain subfamily. Heterodimer of a catalytic heavy chain and a regulatory light chain.

Its subcellular location is the cytoplasm. It participates in sulfur metabolism; glutathione biosynthesis; glutathione from L-cysteine and L-glutamate: step 1/2. This Schizosaccharomyces pombe (strain 972 / ATCC 24843) (Fission yeast) protein is Putative glutamate--cysteine ligase regulatory subunit.